Reading from the N-terminus, the 423-residue chain is Anhydromevalonate phosphate decarboxylase (423 aa).

Residues asparagine 134 and glutamate 197 each contribute to the Mn(2+) site. Aspartate 245 (proton acceptor) is an active-site residue.

This sequence belongs to the UbiD family. Prenylated FMN serves as cofactor. Mn(2+) is required as a cofactor.

The enzyme catalyses (2E)-3-methyl-5-phosphooxypent-2-enoate + H(+) = isopentenyl phosphate + CO2. Its pathway is isoprenoid biosynthesis; isopentenyl diphosphate biosynthesis via mevalonate pathway. In terms of biological role, catalyzes the conversion of trans-anhydromevalonate 5-phosphate (tAHMP) into isopentenyl phosphate. Involved in the archaeal mevalonate (MVA) pathway, which provides fundamental precursors for isoprenoid biosynthesis, such as isopentenyl diphosphate (IPP) and dimethylallyl diphosphate (DMAPP). The chain is Anhydromevalonate phosphate decarboxylase from Methanothermobacter thermautotrophicus (strain ATCC 29096 / DSM 1053 / JCM 10044 / NBRC 100330 / Delta H) (Methanobacterium thermoautotrophicum).